The chain runs to 396 residues: Probable sugar efflux transporter (396 aa).

12 consecutive transmembrane segments (helical) span residues Val15–Leu35, Val50–Leu70, Leu81–Phe101, Val103–Ala123, Ala136–Leu156, Phe170–Leu190, Pro209–Tyr229, Phe246–Gly266, Ala275–Ala295, Ile299–Met319, Val333–Gly353, and Met364–Phe384.

It belongs to the major facilitator superfamily. SotB (TC 2.A.1.2) family.

Its subcellular location is the cell inner membrane. Its function is as follows. Involved in the efflux of sugars. The physiological role may be the reduction of the intracellular concentration of toxic sugars or sugar metabolites. The polypeptide is Probable sugar efflux transporter (Escherichia coli O157:H7 (strain EC4115 / EHEC)).